Reading from the N-terminus, the 200-residue chain is High frequency lysogenization protein HflD homolog (200 aa).

Belongs to the HflD family.

Its subcellular location is the cytoplasm. It is found in the cell inner membrane. The sequence is that of High frequency lysogenization protein HflD homolog from Pseudoalteromonas translucida (strain TAC 125).